The sequence spans 530 residues: Probable cytochrome P450 519A1 (530 aa).

A helical membrane pass occupies residues 1–21; it reads MESIINLIFYIIIFLILIDFL. Residue cysteine 476 coordinates heme.

It belongs to the cytochrome P450 family. Requires heme as cofactor.

It is found in the membrane. This is Probable cytochrome P450 519A1 (cyp519A1) from Dictyostelium discoideum (Social amoeba).